A 429-amino-acid chain; its full sequence is C4-dicarboxylate transport protein (429 aa).

The next 8 helical transmembrane spans lie at 9 to 29 (VLYV…HYYP), 45 to 65 (LIKM…IAGM), 79 to 99 (LLYF…ATHI), 149 to 169 (GEIL…AHLG), 185 to 205 (VLFG…FGAM), 223 to 243 (LIGT…GAIA), 308 to 328 (IYMT…LTWM), and 356 to 376 (AATL…ILGI).

The protein belongs to the dicarboxylate/amino acid:cation symporter (DAACS) (TC 2.A.23) family.

The protein resides in the cell inner membrane. Responsible for the transport of dicarboxylates such as succinate, fumarate, and malate from the periplasm across the membrane. The polypeptide is C4-dicarboxylate transport protein (Burkholderia multivorans (strain ATCC 17616 / 249)).